The following is a 433-amino-acid chain: 5-methylthioadenosine/S-adenosylhomocysteine deaminase (433 aa).

Zn(2+) contacts are provided by His-62 and His-64. Substrate is bound by residues Glu-91, Arg-143, and His-183. His-210 contributes to the Zn(2+) binding site. Substrate-binding residues include Glu-213 and Asp-298. Asp-298 is a Zn(2+) binding site.

This sequence belongs to the metallo-dependent hydrolases superfamily. MTA/SAH deaminase family. Zn(2+) serves as cofactor.

It carries out the reaction S-adenosyl-L-homocysteine + H2O + H(+) = S-inosyl-L-homocysteine + NH4(+). The enzyme catalyses S-methyl-5'-thioadenosine + H2O + H(+) = S-methyl-5'-thioinosine + NH4(+). In terms of biological role, catalyzes the deamination of 5-methylthioadenosine and S-adenosyl-L-homocysteine into 5-methylthioinosine and S-inosyl-L-homocysteine, respectively. Is also able to deaminate adenosine. The protein is 5-methylthioadenosine/S-adenosylhomocysteine deaminase of Caldanaerobacter subterraneus subsp. tengcongensis (strain DSM 15242 / JCM 11007 / NBRC 100824 / MB4) (Thermoanaerobacter tengcongensis).